A 187-amino-acid polypeptide reads, in one-letter code: Transcriptional repressor NrdR (187 aa).

A zinc finger lies at 3–34 (CPFCRHPDSRVVDSRTTDDGTSIRRRRQCPDC). The 91-residue stretch at 46–136 (LMVVKRSGVT…VYRAFDSLED (91 aa)) folds into the ATP-cone domain. The disordered stretch occupies residues 146–187 (EEQRERPAVDDEDHEDAGAERQGTDRGSGGTVEVPVPATVAD).

This sequence belongs to the NrdR family. Zn(2+) serves as cofactor.

In terms of biological role, negatively regulates transcription of bacterial ribonucleotide reductase nrd genes and operons by binding to NrdR-boxes. In Streptomyces avermitilis (strain ATCC 31267 / DSM 46492 / JCM 5070 / NBRC 14893 / NCIMB 12804 / NRRL 8165 / MA-4680), this protein is Transcriptional repressor NrdR.